The sequence spans 380 residues: 3-dehydroquinate synthase (380 aa).

The protein belongs to the archaeal-type DHQ synthase family.

The catalysed reaction is 2-amino-2,3,7-trideoxy-D-lyxo-hept-6-ulosonate + NAD(+) + H2O = 3-dehydroquinate + NH4(+) + NADH + H(+). Catalyzes the oxidative deamination and cyclization of 2-amino-3,7-dideoxy-D-threo-hept-6-ulosonic acid (ADH) to yield 3-dehydroquinate (DHQ), which is fed into the canonical shikimic pathway of aromatic amino acid biosynthesis. This chain is 3-dehydroquinate synthase, found in Methanosarcina acetivorans (strain ATCC 35395 / DSM 2834 / JCM 12185 / C2A).